A 218-amino-acid polypeptide reads, in one-letter code: Large ribosomal subunit protein uL16 (218 aa).

The protein belongs to the universal ribosomal protein uL16 family. In terms of assembly, component of the large ribosomal subunit. Mature ribosomes consist of a small (40S) and a large (60S) subunit. The 40S subunit contains about 33 different proteins and 1 molecule of RNA (18S). The 60S subunit contains about 49 different proteins and 3 molecules of RNA (28S, 5.8S and 5S).

The chain is Large ribosomal subunit protein uL16 (RpL10) from Drosophila melanogaster (Fruit fly).